The following is a 79-amino-acid chain: RNA-binding protein Hfq (79 aa).

In terms of domain architecture, Sm spans 10–70; sequence DAFLNHVRKT…ISTIMPAQPI (61 aa).

Belongs to the Hfq family. Homohexamer.

Its function is as follows. RNA chaperone that binds small regulatory RNA (sRNAs) and mRNAs to facilitate mRNA translational regulation in response to envelope stress, environmental stress and changes in metabolite concentrations. Also binds with high specificity to tRNAs. In Ruegeria pomeroyi (strain ATCC 700808 / DSM 15171 / DSS-3) (Silicibacter pomeroyi), this protein is RNA-binding protein Hfq.